We begin with the raw amino-acid sequence, 217 residues long: Adenylate kinase (217 aa).

Position 10–15 (10–15 (GAGKGT)) interacts with ATP. The interval 30–59 (STGDMLRAAVKAGTPLGIEAKKVMDAGGLV) is NMP. AMP contacts are provided by residues Thr-31, Arg-36, 57–59 (GLV), 85–88 (GFPR), and Gln-92. Residues 122–159 (GRRAHLASGRTYHVKYNPPKVEGKDDVTGEDLVQRDDD) are LID. ATP-binding positions include Arg-123 and 132–133 (TY). AMP contacts are provided by Arg-156 and Arg-167. ATP is bound at residue Gly-203.

The protein belongs to the adenylate kinase family. Monomer.

It is found in the cytoplasm. The catalysed reaction is AMP + ATP = 2 ADP. The protein operates within purine metabolism; AMP biosynthesis via salvage pathway; AMP from ADP: step 1/1. Functionally, catalyzes the reversible transfer of the terminal phosphate group between ATP and AMP. Plays an important role in cellular energy homeostasis and in adenine nucleotide metabolism. The sequence is that of Adenylate kinase from Azoarcus sp. (strain BH72).